Consider the following 292-residue polypeptide: Inositol monophosphatase 2 (292 aa).

Mg(2+) contacts are provided by Glu75, Asp94, Ile96, Asp97, and Asp231. Glu75 contributes to the substrate binding site. Residues 96–99 and Asp231 each bind substrate; that span reads IDGT.

Belongs to the inositol monophosphatase superfamily. Requires Mg(2+) as cofactor.

The catalysed reaction is a myo-inositol phosphate + H2O = myo-inositol + phosphate. Its pathway is polyol metabolism; myo-inositol biosynthesis; myo-inositol from D-glucose 6-phosphate: step 2/2. Its activity is regulated as follows. Inhibited by Li(+) and Na(+). Functionally, responsible for the provision of inositol required for synthesis of phosphatidylinositol and polyphosphoinositides and involved in the inositol cycle of calcium signaling. The chain is Inositol monophosphatase 2 (INM2) from Saccharomyces cerevisiae (strain ATCC 204508 / S288c) (Baker's yeast).